Consider the following 96-residue polypeptide: Small ribosomal subunit protein bS18 (96 aa).

The segment at 1–20 is disordered; the sequence is MSHGGKRRSGDGGSEGSSYS.

It belongs to the bacterial ribosomal protein bS18 family. As to quaternary structure, part of the 30S ribosomal subunit. Forms a tight heterodimer with protein bS6.

Binds as a heterodimer with protein bS6 to the central domain of the 16S rRNA, where it helps stabilize the platform of the 30S subunit. In Anaplasma phagocytophilum (strain HZ), this protein is Small ribosomal subunit protein bS18.